The primary structure comprises 94 residues: Large ribosomal subunit protein eL42 (94 aa).

Positions 11, 14, 71, and 74 each coordinate Zn(2+). Residues 11–74 form a C4-type zinc finger; the sequence is CPFCKKHTIH…LDLRFRCTEC (64 aa).

Belongs to the eukaryotic ribosomal protein eL42 family. Part of the 50S ribosomal subunit. Zn(2+) serves as cofactor.

Functionally, binds to the 23S rRNA. The sequence is that of Large ribosomal subunit protein eL42 from Pyrococcus furiosus (strain ATCC 43587 / DSM 3638 / JCM 8422 / Vc1).